The chain runs to 257 residues: Flagellar brake protein YcgR 1 (257 aa).

Positions 1–18 are enriched in polar residues; the sequence is MDTTQSNGQTDTQGQLHA. Positions 1–30 are disordered; that stretch reads MDTTQSNGQTDTQGQLHAQTAEGGNDFGRR. Residues 133-246 form the PilZ domain; that stretch reads QRREYFRVDA…AENTLQRLIT (114 aa).

This sequence belongs to the YcgR family. Monomer. Interacts with the flagellar basal bodies.

The protein resides in the bacterial flagellum basal body. Functionally, acts as a flagellar brake, regulating swimming and swarming in a bis-(3'-5') cyclic diguanylic acid (c-di-GMP)-dependent manner. Binds 1 c-di-GMP dimer per subunit. Increasing levels of c-di-GMP lead to decreased motility. In Paraburkholderia phytofirmans (strain DSM 17436 / LMG 22146 / PsJN) (Burkholderia phytofirmans), this protein is Flagellar brake protein YcgR 1.